The sequence spans 413 residues: MKIYLVGGAVRDALLGLPVKDKDWVVVGATPQEMLDAGYQQVGRDFPVFLHPQTREEYALARTERKSGSGYTGFTCYAAPDVTLEEDLQRRDLTINALAQDDDGHIVDPYQGRRDLDNRLLRHVSPAFSEDPLRVLRVARFAARYAHLSFRIADETLALMRDMTAAGELEHLTPERVWKETENALTTRNPQVFFQVLRDCGALRVLFPEVDALFGVPAPAKWHPEIDTGIHTLMTLSMAAMLSPNVDVRFATLCHDLGKGLTPKALWPRHHGHGPAGVKLVEQLCQRLRVPNEIRDLAKLVAEFHDLIHTFPILQPKTIVKLFDSIDAWRKPQRVEQIALTSEADVRGRTGFEASDYPQGRWLREAWLVAQAVPTKEVVEAGFKGAEIREELTRRRIAAVANWKERRCPKPEA.

ATP is bound by residues G8 and R11. The CTP site is built by G8 and R11. Residues D21 and D23 each contribute to the Mg(2+) site. The ATP site is built by R91, R137, and R140. R91, R137, and R140 together coordinate CTP. One can recognise an HD domain in the interval 228–329 (TGIHTLMTLS…VKLFDSIDAW (102 aa)).

The protein belongs to the tRNA nucleotidyltransferase/poly(A) polymerase family. Bacterial CCA-adding enzyme type 1 subfamily. Monomer. Can also form homodimers and oligomers. Requires Mg(2+) as cofactor. Ni(2+) is required as a cofactor.

It carries out the reaction a tRNA precursor + 2 CTP + ATP = a tRNA with a 3' CCA end + 3 diphosphate. The enzyme catalyses a tRNA with a 3' CCA end + 2 CTP + ATP = a tRNA with a 3' CCACCA end + 3 diphosphate. Its function is as follows. Catalyzes the addition and repair of the essential 3'-terminal CCA sequence in tRNAs without using a nucleic acid template. Adds these three nucleotides in the order of C, C, and A to the tRNA nucleotide-73, using CTP and ATP as substrates and producing inorganic pyrophosphate. tRNA 3'-terminal CCA addition is required both for tRNA processing and repair. Also involved in tRNA surveillance by mediating tandem CCA addition to generate a CCACCA at the 3' terminus of unstable tRNAs. While stable tRNAs receive only 3'-terminal CCA, unstable tRNAs are marked with CCACCA and rapidly degraded. This is Multifunctional CCA protein from Citrobacter koseri (strain ATCC BAA-895 / CDC 4225-83 / SGSC4696).